Here is a 556-residue protein sequence, read N- to C-terminus: Formate--tetrahydrofolate ligase (556 aa).

65 to 72 (TPAGEGKS) is a binding site for ATP.

It belongs to the formate--tetrahydrofolate ligase family.

The catalysed reaction is (6S)-5,6,7,8-tetrahydrofolate + formate + ATP = (6R)-10-formyltetrahydrofolate + ADP + phosphate. The protein operates within one-carbon metabolism; tetrahydrofolate interconversion. The polypeptide is Formate--tetrahydrofolate ligase (Streptococcus pneumoniae serotype 19F (strain G54)).